The chain runs to 280 residues: Pantothenate synthetase (280 aa).

30–37 serves as a coordination point for ATP; that stretch reads MGYLHEGH. Histidine 37 serves as the catalytic Proton donor. Position 61 (glutamine 61) interacts with (R)-pantoate. Glutamine 61 is a binding site for beta-alanine. Residue 147–150 participates in ATP binding; the sequence is GKKD. Glutamine 153 serves as a coordination point for (R)-pantoate. ATP-binding positions include valine 176 and 184–187; that span reads MSSR.

It belongs to the pantothenate synthetase family. As to quaternary structure, homodimer.

It localises to the cytoplasm. It catalyses the reaction (R)-pantoate + beta-alanine + ATP = (R)-pantothenate + AMP + diphosphate + H(+). It participates in cofactor biosynthesis; (R)-pantothenate biosynthesis; (R)-pantothenate from (R)-pantoate and beta-alanine: step 1/1. In terms of biological role, catalyzes the condensation of pantoate with beta-alanine in an ATP-dependent reaction via a pantoyl-adenylate intermediate. The sequence is that of Pantothenate synthetase from Sulfurihydrogenibium sp. (strain YO3AOP1).